The following is a 452-amino-acid chain: Probable dihydrolipoyllysine-residue succinyltransferase component of 2-oxoglutarate dehydrogenase complex, mitochondrial (452 aa).

Residues 42–117 (STRIKTPPFP…TIDQDIAVID (76 aa)) form the Lipoyl-binding domain. Lys83 carries the post-translational modification N6-lipoyllysine. Positions 119 to 225 (SAAPPEGGSA…FSRNEDRVKM (107 aa)) are disordered. Composition is skewed to basic and acidic residues over residues 130–144 (PKKD…DAAK), 154–170 (KPIE…EQKE), and 195–209 (AKSE…KATE). Catalysis depends on residues His424 and Asp428.

Belongs to the 2-oxoacid dehydrogenase family. (R)-lipoate serves as cofactor.

Its subcellular location is the mitochondrion. The catalysed reaction is N(6)-[(R)-dihydrolipoyl]-L-lysyl-[protein] + succinyl-CoA = N(6)-[(R)-S(8)-succinyldihydrolipoyl]-L-lysyl-[protein] + CoA. It functions in the pathway amino-acid degradation; L-lysine degradation via saccharopine pathway; glutaryl-CoA from L-lysine: step 6/6. Functionally, the 2-oxoglutarate dehydrogenase complex catalyzes the overall conversion of 2-oxoglutarate to succinyl-CoA and CO(2). It contains multiple copies of three enzymatic components: 2-oxoglutarate dehydrogenase (E1), dihydrolipoamide succinyltransferase (E2) and lipoamide dehydrogenase (E3). This is Probable dihydrolipoyllysine-residue succinyltransferase component of 2-oxoglutarate dehydrogenase complex, mitochondrial (kgd2) from Schizosaccharomyces pombe (strain 972 / ATCC 24843) (Fission yeast).